Reading from the N-terminus, the 459-residue chain is cAMP-dependent protein kinase regulatory subunit (459 aa).

The tract at residues 30–219 is dimerization and phosphorylation; the sequence is QFCANYFNTK…TLANNLKNNF (190 aa). 2 disordered regions span residues 78 to 109 and 125 to 168; these read VNDRQPSFKSPFGVNDPHSNHDEDPHAKDTKT and FDVK…PSSK. Over residues 95–109 the composition is skewed to basic and acidic residues; the sequence is HSNHDEDPHAKDTKT. A compositionally biased stretch (low complexity) spans 146-168; it reads KPSSSSQPNQQSASASSKTPSSK. At S180 the chain carries Phosphoserine. Residues 220 to 335, E285, R294, 338 to 454, E404, and R413 contribute to the 3',5'-cyclic AMP site; these read LFKQ…FLKD and VLKS…KSQD.

It belongs to the cAMP-dependent kinase regulatory chain family. In terms of assembly, tetramer, composed of 2 regulatory (R) and 2 catalytic (C) subunits. In the presence of cAMP it dissociates into 2 active monomeric C subunits and an R dimer.

In Candida albicans (strain SC5314 / ATCC MYA-2876) (Yeast), this protein is cAMP-dependent protein kinase regulatory subunit (BCY1).